We begin with the raw amino-acid sequence, 314 residues long: 2,3-dihydroxyphenylpropionate/2,3-dihydroxicinnamic acid 1,2-dioxygenase (314 aa).

Catalysis depends on His-115, which acts as the Proton donor. The active-site Proton acceptor is His-179.

This sequence belongs to the LigB/MhpB extradiol dioxygenase family. In terms of assembly, homotetramer. Fe(2+) is required as a cofactor.

It carries out the reaction 3-(2,3-dihydroxyphenyl)propanoate + O2 = (2Z,4E)-2-hydroxy-6-oxonona-2,4-dienedioate + H(+). The catalysed reaction is (2E)-3-(2,3-dihydroxyphenyl)prop-2-enoate + O2 = (2Z,4E,7E)-2-hydroxy-6-oxonona-2,4,7-trienedioate + H(+). It functions in the pathway aromatic compound metabolism; 3-phenylpropanoate degradation. Its function is as follows. Catalyzes the non-heme iron(II)-dependent oxidative cleavage of 2,3-dihydroxyphenylpropionic acid and 2,3-dihydroxicinnamic acid into 2-hydroxy-6-ketononadienedioate and 2-hydroxy-6-ketononatrienedioate, respectively. This is 2,3-dihydroxyphenylpropionate/2,3-dihydroxicinnamic acid 1,2-dioxygenase from Escherichia coli O139:H28 (strain E24377A / ETEC).